Here is a 293-residue protein sequence, read N- to C-terminus: MPTQRIISAVIGIALAFSLLILGGWYFSAAIALVIYLGLREYFQMVRAKGIAPAAKTTMVLSLMLLLSATVTPHLTDAFFPLTGALICFYLLFQPKMATIADISTSLLGLFYGGYLPSYWVRLRLGDGAVNPMGLHLPLNGFWPESWAHPENFPTGLLVTILAFACIWAADIGAYIMGKWLGRTRLSDISPKKTVEGSLWGVGGSLLVGVLGAWYLQWPYWEITGALLGLLIGIVSLLGDLTESMMKRDAGVKDSGQLIPGHGGILDRTDSYVFTAPLVYYFVVLLLPVLNNL.

The next 8 membrane-spanning stretches (helical) occupy residues 6–26 (IISA…GGWY), 51–71 (IAPA…SATV), 73–93 (PHLT…YLLF), 97–117 (MATI…GYLP), 157–177 (LLVT…AYIM), 195–215 (VEGS…GAWY), 218–238 (WPYW…VSLL), and 273–293 (VFTA…LNNL).

Belongs to the CDS family.

Its subcellular location is the cell membrane. It catalyses the reaction a 1,2-diacyl-sn-glycero-3-phosphate + CTP + H(+) = a CDP-1,2-diacyl-sn-glycerol + diphosphate. It participates in phospholipid metabolism; CDP-diacylglycerol biosynthesis; CDP-diacylglycerol from sn-glycerol 3-phosphate: step 3/3. The protein is Phosphatidate cytidylyltransferase (cdsA) of Synechocystis sp. (strain ATCC 27184 / PCC 6803 / Kazusa).